We begin with the raw amino-acid sequence, 460 residues long: Argininosuccinate lyase (460 aa).

It belongs to the lyase 1 family. Argininosuccinate lyase subfamily.

It localises to the cytoplasm. It catalyses the reaction 2-(N(omega)-L-arginino)succinate = fumarate + L-arginine. Its pathway is amino-acid biosynthesis; L-arginine biosynthesis; L-arginine from L-ornithine and carbamoyl phosphate: step 3/3. The polypeptide is Argininosuccinate lyase (Lawsonia intracellularis (strain PHE/MN1-00)).